A 506-amino-acid polypeptide reads, in one-letter code: Maturase K (506 aa).

This sequence belongs to the intron maturase 2 family. MatK subfamily.

It is found in the plastid. It localises to the chloroplast. Usually encoded in the trnK tRNA gene intron. Probably assists in splicing its own and other chloroplast group II introns. The protein is Maturase K of Phyllodoce empetriformis (Pink mountainheath).